The sequence spans 147 residues: Deoxyuridine 5'-triphosphate nucleotidohydrolase (147 aa).

Substrate contacts are provided by residues 63–65, N76, and 80–82; these read RSG and TID.

This sequence belongs to the dUTPase family. Requires Mg(2+) as cofactor.

It catalyses the reaction dUTP + H2O = dUMP + diphosphate + H(+). The protein operates within pyrimidine metabolism; dUMP biosynthesis; dUMP from dCTP (dUTP route): step 2/2. Its function is as follows. This enzyme is involved in nucleotide metabolism: it produces dUMP, the immediate precursor of thymidine nucleotides and it decreases the intracellular concentration of dUTP so that uracil cannot be incorporated into DNA. The sequence is that of Deoxyuridine 5'-triphosphate nucleotidohydrolase from Chlamydia caviae (strain ATCC VR-813 / DSM 19441 / 03DC25 / GPIC) (Chlamydophila caviae).